A 297-amino-acid chain; its full sequence is 3'-5' exonuclease eri1 (297 aa).

The 35-residue stretch at 4-38 folds into the SAP domain; that stretch reads KTPSTVEEIRIALQELGLSTNGNKEKLKRRWKFRE. An Exonuclease domain is found at 68-153; that stretch reads IVDVEATCEE…EELFIFLRKH (86 aa). Residues Asp-70 and Glu-72 each contribute to the Mg(2+) site. Glu-72 acts as the Proton acceptor in catalysis. 2 residues coordinate AMP: Glu-72 and Ala-73. Asp-190 provides a ligand contact to Mg(2+). The Proton acceptor role is filled by His-248. His-248 is an AMP binding site. Asp-253 provides a ligand contact to Mg(2+).

It depends on Mg(2+) as a cofactor.

It localises to the cytoplasm. Its function is as follows. RNA exonuclease that acts as a negative regulator of RNA interference (RNAi). Acts by degrading the 3'-overhangs of double-stranded short interfering RNAs (siRNAs). Represses the accumulation of heterochromatic siRNAs leading to negative regulation of the RNAi-mediated heterochromoatin assembly. Also involved in rRNA biogenesis, trimming the 5.8S ribosomal RNA (rRNA) from a slightly longer pre-5.8S RNA in the cytoplasm. The protein is 3'-5' exonuclease eri1 (eri1) of Schizosaccharomyces pombe (strain 972 / ATCC 24843) (Fission yeast).